The chain runs to 341 residues: MQSITVALDAMGGDFGPRVTVPAAVQALSHFPELKVILTGDQQQITSQLSLLGYKPDARLSVQHCDRMISNSEKPSLALRNSQGSSMRHAIELVADSTADACVSGGNTGALMALSRFILKLLPGIDRPALISALPTVTGGRSWMLDLGANVSCDADTLFQFAVMGSALAEEHLNRAPRVAVLNVGEEETKGNDLVKRCAELLSQTQAVHFVGYIEGNQILKNAADVIVCDGFVGNVCLKASEGTAQLFIEKIKTSMMASSIKGWIARILFSELFNELKTLNPDQYNGASLLGLRGIVIKSHGSADVSALVNAIGEAVHEVKRQVPSRISDRLEAVLLERHY.

This sequence belongs to the PlsX family. Homodimer. Probably interacts with PlsY.

The protein resides in the cytoplasm. It carries out the reaction a fatty acyl-[ACP] + phosphate = an acyl phosphate + holo-[ACP]. Its pathway is lipid metabolism; phospholipid metabolism. Catalyzes the reversible formation of acyl-phosphate (acyl-PO(4)) from acyl-[acyl-carrier-protein] (acyl-ACP). This enzyme utilizes acyl-ACP as fatty acyl donor, but not acyl-CoA. In Vibrio vulnificus (strain CMCP6), this protein is Phosphate acyltransferase.